Reading from the N-terminus, the 496-residue chain is UDP-N-acetylmuramoyl-L-alanyl-D-glutamate--2,6-diaminopimelate ligase (496 aa).

UDP-N-acetyl-alpha-D-muramoyl-L-alanyl-D-glutamate is bound by residues L29 and S31. G118 to T124 contributes to the ATP binding site. UDP-N-acetyl-alpha-D-muramoyl-L-alanyl-D-glutamate contacts are provided by residues N159, T160–T161, S187, Q193, and R195. An N6-carboxylysine modification is found at K227. Meso-2,6-diaminopimelate-binding positions include R392, D416–R419, G467, and E471. A Meso-diaminopimelate recognition motif motif is present at residues D416–R419.

This sequence belongs to the MurCDEF family. MurE subfamily. It depends on Mg(2+) as a cofactor. Carboxylation is probably crucial for Mg(2+) binding and, consequently, for the gamma-phosphate positioning of ATP.

It is found in the cytoplasm. The catalysed reaction is UDP-N-acetyl-alpha-D-muramoyl-L-alanyl-D-glutamate + meso-2,6-diaminopimelate + ATP = UDP-N-acetyl-alpha-D-muramoyl-L-alanyl-gamma-D-glutamyl-meso-2,6-diaminopimelate + ADP + phosphate + H(+). It participates in cell wall biogenesis; peptidoglycan biosynthesis. Catalyzes the addition of meso-diaminopimelic acid to the nucleotide precursor UDP-N-acetylmuramoyl-L-alanyl-D-glutamate (UMAG) in the biosynthesis of bacterial cell-wall peptidoglycan. The chain is UDP-N-acetylmuramoyl-L-alanyl-D-glutamate--2,6-diaminopimelate ligase from Wigglesworthia glossinidia brevipalpis.